Consider the following 277-residue polypeptide: Ribonuclease HII (277 aa).

Residues 20 to 250 (KLIIGLDEAG…SKKLLKKIED (231 aa)) enclose the RNase H type-2 domain. The a divalent metal cation site is built by Asp26, Glu27, and Asp141.

The protein belongs to the RNase HII family. Mn(2+) serves as cofactor. The cofactor is Mg(2+).

It localises to the cytoplasm. It catalyses the reaction Endonucleolytic cleavage to 5'-phosphomonoester.. Endonuclease that specifically degrades the RNA of RNA-DNA hybrids. In Methanococcus aeolicus (strain ATCC BAA-1280 / DSM 17508 / OCM 812 / Nankai-3), this protein is Ribonuclease HII.